The sequence spans 172 residues: Zinc finger protein 580 (172 aa).

The segment at 1–92 (MLLLPPRPPH…PGEPGPRKGY (92 aa)) is disordered. Pro residues predominate over residues 19–30 (MDPPPPKTPPFP). A Glycyl lysine isopeptide (Lys-Gly) (interchain with G-Cter in SUMO2) cross-link involves residue Lys31. The C2H2-type 1 zinc finger occupies 92-114 (YSCPECARVFASPLRLQSHRVSH). Lys118 participates in a covalent cross-link: Glycyl lysine isopeptide (Lys-Gly) (interchain with G-Cter in SUMO2). 2 C2H2-type zinc fingers span residues 120 to 142 (FTCG…RATH) and 150 to 172 (HTCP…VRLH).

Interacts with SMAD2.

Its subcellular location is the nucleus. In terms of biological role, involved in the regulation of endothelial cell proliferation and migration. Mediates H(2)O(2)-induced leukocyte chemotaxis by elevating interleukin-8 production and may play a role in inflammation. May be involved in transcriptional regulation. This is Zinc finger protein 580 (Znf580) from Mus musculus (Mouse).